Consider the following 435-residue polypeptide: Serine hydroxymethyltransferase (435 aa).

(6S)-5,6,7,8-tetrahydrofolate-binding positions include leucine 133 and 137-139; that span reads GHL. Residue lysine 242 is modified to N6-(pyridoxal phosphate)lysine.

This sequence belongs to the SHMT family. Homodimer. Pyridoxal 5'-phosphate is required as a cofactor.

The protein resides in the cytoplasm. The enzyme catalyses (6R)-5,10-methylene-5,6,7,8-tetrahydrofolate + glycine + H2O = (6S)-5,6,7,8-tetrahydrofolate + L-serine. Its pathway is one-carbon metabolism; tetrahydrofolate interconversion. It participates in amino-acid biosynthesis; glycine biosynthesis; glycine from L-serine: step 1/1. In terms of biological role, catalyzes the reversible interconversion of serine and glycine with tetrahydrofolate (THF) serving as the one-carbon carrier. This reaction serves as the major source of one-carbon groups required for the biosynthesis of purines, thymidylate, methionine, and other important biomolecules. Also exhibits THF-independent aldolase activity toward beta-hydroxyamino acids, producing glycine and aldehydes, via a retro-aldol mechanism. The chain is Serine hydroxymethyltransferase from Hyphomonas neptunium (strain ATCC 15444).